We begin with the raw amino-acid sequence, 46 residues long: Endochitinase 3 (46 aa).

A disordered region spans residues 1–21 (MTPQGNKPSSHDVITGRWTPS).

This sequence belongs to the glycosyl hydrolase 19 family. Chitinase class I subfamily.

It catalyses the reaction Random endo-hydrolysis of N-acetyl-beta-D-glucosaminide (1-&gt;4)-beta-linkages in chitin and chitodextrins.. Defense against chitin-containing fungal and bacterial pathogens. The polypeptide is Endochitinase 3 (Arachis hypogaea (Peanut)).